Here is a 210-residue protein sequence, read N- to C-terminus: Imidazole glycerol phosphate synthase subunit HisH (210 aa).

The Glutamine amidotransferase type-1 domain occupies 1–205 (MIAVINYGAG…VELALSRGSG (205 aa)). Cysteine 79 serves as the catalytic Nucleophile. Active-site residues include histidine 180 and glutamate 182.

Heterodimer of HisH and HisF.

The protein resides in the cytoplasm. It carries out the reaction 5-[(5-phospho-1-deoxy-D-ribulos-1-ylimino)methylamino]-1-(5-phospho-beta-D-ribosyl)imidazole-4-carboxamide + L-glutamine = D-erythro-1-(imidazol-4-yl)glycerol 3-phosphate + 5-amino-1-(5-phospho-beta-D-ribosyl)imidazole-4-carboxamide + L-glutamate + H(+). The enzyme catalyses L-glutamine + H2O = L-glutamate + NH4(+). It functions in the pathway amino-acid biosynthesis; L-histidine biosynthesis; L-histidine from 5-phospho-alpha-D-ribose 1-diphosphate: step 5/9. IGPS catalyzes the conversion of PRFAR and glutamine to IGP, AICAR and glutamate. The HisH subunit catalyzes the hydrolysis of glutamine to glutamate and ammonia as part of the synthesis of IGP and AICAR. The resulting ammonia molecule is channeled to the active site of HisF. The sequence is that of Imidazole glycerol phosphate synthase subunit HisH from Herpetosiphon aurantiacus (strain ATCC 23779 / DSM 785 / 114-95).